Here is a 567-residue protein sequence, read N- to C-terminus: Potassium-transporting ATPase potassium-binding subunit (567 aa).

12 helical membrane-spanning segments follow: residues 11–31 (LYLLVLLALAWPLGRYLAALL), 67–87 (AAAILLFNLAGVVLLFLLQRW), 136–156 (GLAVQNFLSAATGIAVVVALV), 179–199 (LWLLLPLSIVVALVLVWQGVV), 255–275 (FSNWVEMLSIFLVPAALVVMF), 286–306 (VVLLAAMTVLFVGAFAVVYLA), 333–353 (FGVLASSLFATITTAASCGAV), 363–383 (LGGGMTMLLMQLGEVVFGGVG), 385–405 (GLYGMLLFAVLAVFMAGLMIG), 422–442 (LVSVAILVGPLLVLAGTAIAV), 489–509 (LMLAVAMWFGRFAVIVPVLAL), and 532–552 (LFVVLLVLSVLLIGALTYIPA).

Belongs to the KdpA family. As to quaternary structure, the system is composed of three essential subunits: KdpA, KdpB and KdpC.

The protein localises to the cell inner membrane. Functionally, part of the high-affinity ATP-driven potassium transport (or Kdp) system, which catalyzes the hydrolysis of ATP coupled with the electrogenic transport of potassium into the cytoplasm. This subunit binds the periplasmic potassium ions and delivers the ions to the membrane domain of KdpB through an intramembrane tunnel. This chain is Potassium-transporting ATPase potassium-binding subunit, found in Laribacter hongkongensis (strain HLHK9).